The sequence spans 198 residues: Peroxiredoxin-2 (198 aa).

At Ala-2 the chain carries N-acetylalanine. Positions 6–164 (AHIGKPAPDF…ALRLVQAFQY (159 aa)) constitute a Thioredoxin domain. Cys-51 acts as the Cysteine sulfenic acid (-SOH) intermediate in catalysis. Ser-112 bears the Phosphoserine mark. The residue at position 182 (Thr-182) is a Phosphothreonine. Lys-196 bears the N6-acetyllysine mark.

This sequence belongs to the peroxiredoxin family. AhpC/Prx1 subfamily. In terms of assembly, homodimer; disulfide-linked, upon oxidation. 5 homodimers assemble to form a ring-like decamer. Interacts with TIPIN. The enzyme can be inactivated by further oxidation of the cysteine sulfenic acid (C(P)-SOH) to sulphinic acid (C(P)-SO2H) instead of its condensation to a disulfide bond. It can be reactivated by forming a transient disulfide bond with sulfiredoxin SRXN1, which reduces the cysteine sulfinic acid in an ATP- and Mg-dependent manner. In terms of processing, acetylation increases resistance to transition to high molecular-mass complexes. Deacetylated by HDAC6 which decreases reducing activity.

Its subcellular location is the cytoplasm. The catalysed reaction is a hydroperoxide + [thioredoxin]-dithiol = an alcohol + [thioredoxin]-disulfide + H2O. Its function is as follows. Thiol-specific peroxidase that catalyzes the reduction of hydrogen peroxide and organic hydroperoxides to water and alcohols, respectively. Plays a role in cell protection against oxidative stress by detoxifying peroxides and as sensor of hydrogen peroxide-mediated signaling events. Might participate in the signaling cascades of growth factors and tumor necrosis factor-alpha by regulating the intracellular concentrations of H(2)O(2). The protein is Peroxiredoxin-2 (PRDX2) of Cricetulus griseus (Chinese hamster).